An 87-amino-acid chain; its full sequence is MSLLEFFRPQKKTSASLAKERLQIIVAERRSQNDPAPSYLPQLKEDILKVISKYVDIDPNMVDLTFEHKDDDISVLELNVKLPDDEK.

Belongs to the MinE family.

Prevents the cell division inhibition by proteins MinC and MinD at internal division sites while permitting inhibition at polar sites. This ensures cell division at the proper site by restricting the formation of a division septum at the midpoint of the long axis of the cell. This chain is Cell division topological specificity factor, found in Vibrio parahaemolyticus serotype O3:K6 (strain RIMD 2210633).